The primary structure comprises 373 residues: Chorismate synthase (373 aa).

NADP(+) is bound at residue Arg-46. FMN-binding positions include 123-125, 251-252, Gly-295, 310-314, and Arg-337; these read RSS, NA, and KPTPS.

Belongs to the chorismate synthase family. Requires FMNH2 as cofactor.

It carries out the reaction 5-O-(1-carboxyvinyl)-3-phosphoshikimate = chorismate + phosphate. It participates in metabolic intermediate biosynthesis; chorismate biosynthesis; chorismate from D-erythrose 4-phosphate and phosphoenolpyruvate: step 7/7. Catalyzes the anti-1,4-elimination of the C-3 phosphate and the C-6 proR hydrogen from 5-enolpyruvylshikimate-3-phosphate (EPSP) to yield chorismate, which is the branch point compound that serves as the starting substrate for the three terminal pathways of aromatic amino acid biosynthesis. This reaction introduces a second double bond into the aromatic ring system. This chain is Chorismate synthase, found in Methanococcus maripaludis (strain DSM 14266 / JCM 13030 / NBRC 101832 / S2 / LL).